A 189-amino-acid chain; its full sequence is Orcokinin peptides (189 aa).

A signal peptide spans M1 to A21. 2 propeptides span residues D22–K124 and F145–S174.

It belongs to the orcokinin family. As to expression, orcokinin-like peptide: Expressed in corpora cardiaca (CC), corpora allata (CA), antennal lobe (AL) and gnathal ganglion (GNG) (at protein level). Expression in CC, CA and GNG detected in some animals, in AL in few animals (at protein level). Orcokinin-like peptide precursor-related peptide: Expressed in corpora cardiaca (CC), corpora allata (CA), antennal lobe (AL) and gnathal ganglion (GNG) (at protein level). Expression in GNG detected in most animals, expression in CC, CA and AL detected in some animals (at protein level).

It is found in the secreted. Myotropic peptides. This chain is Orcokinin peptides, found in Agrotis ipsilon (Black cutworm moth).